We begin with the raw amino-acid sequence, 220 residues long: Increased recombination centers protein 22 (220 aa).

The N-terminal stretch at 1–19 (MKLSNLLLFANVGTLLVKA) is a signal peptide. Over 20–166 (TDENISPNEE…PPPMSFFNPK (147 aa)) the chain is Lumenal. The helical transmembrane segment at 167 to 186 (FLSIQAVLIGVISYFTYFIF) threads the bilayer. Residues 187-220 (RSSKKERRGVVSKTKAPKKVKLDESWLPENHLKK) lie on the Cytoplasmic side of the membrane.

This sequence belongs to the IRC22 family.

It localises to the endoplasmic reticulum membrane. Its function is as follows. Is probably involved in a pathway contributing to genomic integrity. The sequence is that of Increased recombination centers protein 22 (IRC22) from Eremothecium gossypii (strain ATCC 10895 / CBS 109.51 / FGSC 9923 / NRRL Y-1056) (Yeast).